The sequence spans 411 residues: Serine hydroxymethyltransferase (411 aa).

120–122 contributes to the (6S)-5,6,7,8-tetrahydrofolate binding site; the sequence is GHL. Lys-225 carries the N6-(pyridoxal phosphate)lysine modification. 350-352 provides a ligand contact to (6S)-5,6,7,8-tetrahydrofolate; sequence SPF.

Belongs to the SHMT family. In terms of assembly, homodimer. Pyridoxal 5'-phosphate is required as a cofactor.

The protein resides in the cytoplasm. It catalyses the reaction (6R)-5,10-methylene-5,6,7,8-tetrahydrofolate + glycine + H2O = (6S)-5,6,7,8-tetrahydrofolate + L-serine. It functions in the pathway one-carbon metabolism; tetrahydrofolate interconversion. The protein operates within amino-acid biosynthesis; glycine biosynthesis; glycine from L-serine: step 1/1. In terms of biological role, catalyzes the reversible interconversion of serine and glycine with tetrahydrofolate (THF) serving as the one-carbon carrier. This reaction serves as the major source of one-carbon groups required for the biosynthesis of purines, thymidylate, methionine, and other important biomolecules. Also exhibits THF-independent aldolase activity toward beta-hydroxyamino acids, producing glycine and aldehydes, via a retro-aldol mechanism. This Limosilactobacillus reuteri (strain DSM 20016) (Lactobacillus reuteri) protein is Serine hydroxymethyltransferase.